A 70-amino-acid chain; its full sequence is MNFWHLLLLAVLFFVTVFGADLEGSGSGDVVEDASEQAILKAQNLLNSVPSEESGAEVEASGEDVQTFFF.

The first 19 residues, Met-1 to Gly-19, serve as a signal peptide directing secretion. O-linked (Xyl...) (chondroitin sulfate) serine glycosylation is found at Ser-25 and Ser-27.

The chain is Chondroitin proteoglycan 9 (cpg-9) from Caenorhabditis briggsae.